The chain runs to 463 residues: L-seryl-tRNA(Sec) selenium transferase (463 aa).

Lys295 bears the N6-(pyridoxal phosphate)lysine mark.

Belongs to the SelA family. As to quaternary structure, homodecamer; pentamer of dimers. Binds only one seryl-tRNA(Sec) per dimer. It depends on pyridoxal 5'-phosphate as a cofactor.

It localises to the cytoplasm. It carries out the reaction L-seryl-tRNA(Sec) + selenophosphate + H(+) = L-selenocysteinyl-tRNA(Sec) + phosphate. Its pathway is aminoacyl-tRNA biosynthesis; selenocysteinyl-tRNA(Sec) biosynthesis; selenocysteinyl-tRNA(Sec) from L-seryl-tRNA(Sec) (bacterial route): step 1/1. Functionally, converts seryl-tRNA(Sec) to selenocysteinyl-tRNA(Sec) required for selenoprotein biosynthesis. The chain is L-seryl-tRNA(Sec) selenium transferase from Serratia proteamaculans (strain 568).